A 536-amino-acid polypeptide reads, in one-letter code: CTP synthase (536 aa).

Residues 1 to 267 (MSKFVFVTGG…CKETLRCLDL (267 aa)) form an amidoligase domain region. S13 contacts CTP. S13 is a binding site for UTP. Residues 14 to 19 (SIGKGI) and D71 each bind ATP. Positions 71 and 141 each coordinate Mg(2+). CTP-binding positions include 148 to 150 (DIE), 188 to 193 (KTKPTQ), and K224. UTP contacts are provided by residues 188 to 193 (KTKPTQ) and K224. A Glutamine amidotransferase type-1 domain is found at 292-534 (KVALVGKYIE…IKASREKLEQ (243 aa)). G354 is a binding site for L-glutamine. C381 acts as the Nucleophile; for glutamine hydrolysis in catalysis. Residues 382–385 (LGMQ), E405, and R462 each bind L-glutamine. Residues H507 and E509 contribute to the active site.

It belongs to the CTP synthase family. As to quaternary structure, homotetramer.

It carries out the reaction UTP + L-glutamine + ATP + H2O = CTP + L-glutamate + ADP + phosphate + 2 H(+). It catalyses the reaction L-glutamine + H2O = L-glutamate + NH4(+). The catalysed reaction is UTP + NH4(+) + ATP = CTP + ADP + phosphate + 2 H(+). The protein operates within pyrimidine metabolism; CTP biosynthesis via de novo pathway; CTP from UDP: step 2/2. Allosterically activated by GTP, when glutamine is the substrate; GTP has no effect on the reaction when ammonia is the substrate. The allosteric effector GTP functions by stabilizing the protein conformation that binds the tetrahedral intermediate(s) formed during glutamine hydrolysis. Inhibited by the product CTP, via allosteric rather than competitive inhibition. Its function is as follows. Catalyzes the ATP-dependent amination of UTP to CTP with either L-glutamine or ammonia as the source of nitrogen. Regulates intracellular CTP levels through interactions with the four ribonucleotide triphosphates. This Prochlorococcus marinus (strain MIT 9515) protein is CTP synthase.